The chain runs to 240 residues: UDP-2,3-diacylglucosamine hydrolase (240 aa).

Residues Asp7, His9, Asp40, Asn78, and His113 each coordinate Mn(2+). A substrate-binding site is contributed by 78–79 (NR). Substrate-binding residues include Asp121, Ser159, Thr163, Lys166, and His194. Residues His194 and His196 each contribute to the Mn(2+) site.

It belongs to the LpxH family. Mn(2+) serves as cofactor.

It is found in the cell inner membrane. It carries out the reaction UDP-2-N,3-O-bis[(3R)-3-hydroxytetradecanoyl]-alpha-D-glucosamine + H2O = 2-N,3-O-bis[(3R)-3-hydroxytetradecanoyl]-alpha-D-glucosaminyl 1-phosphate + UMP + 2 H(+). Its pathway is glycolipid biosynthesis; lipid IV(A) biosynthesis; lipid IV(A) from (3R)-3-hydroxytetradecanoyl-[acyl-carrier-protein] and UDP-N-acetyl-alpha-D-glucosamine: step 4/6. Functionally, hydrolyzes the pyrophosphate bond of UDP-2,3-diacylglucosamine to yield 2,3-diacylglucosamine 1-phosphate (lipid X) and UMP by catalyzing the attack of water at the alpha-P atom. Involved in the biosynthesis of lipid A, a phosphorylated glycolipid that anchors the lipopolysaccharide to the outer membrane of the cell. This chain is UDP-2,3-diacylglucosamine hydrolase, found in Pseudomonas putida (strain W619).